Here is a 161-residue protein sequence, read N- to C-terminus: Large ribosomal subunit protein uL15 (161 aa).

The disordered stretch occupies residues Met-1–Gly-43. Over residues Arg-21 to Gly-37 the composition is skewed to gly residues.

This sequence belongs to the universal ribosomal protein uL15 family. Part of the 50S ribosomal subunit.

In terms of biological role, binds to the 23S rRNA. The sequence is that of Large ribosomal subunit protein uL15 from Rhodopseudomonas palustris (strain BisB5).